Reading from the N-terminus, the 159-residue chain is Crossover junction endodeoxyribonuclease RuvC (159 aa).

Catalysis depends on residues Asp-7, Glu-66, and Asp-139. Mg(2+) contacts are provided by Asp-7, Glu-66, and Asp-139.

The protein belongs to the RuvC family. Homodimer which binds Holliday junction (HJ) DNA. The HJ becomes 2-fold symmetrical on binding to RuvC with unstacked arms; it has a different conformation from HJ DNA in complex with RuvA. In the full resolvosome a probable DNA-RuvA(4)-RuvB(12)-RuvC(2) complex forms which resolves the HJ. Mg(2+) serves as cofactor.

It localises to the cytoplasm. It carries out the reaction Endonucleolytic cleavage at a junction such as a reciprocal single-stranded crossover between two homologous DNA duplexes (Holliday junction).. The RuvA-RuvB-RuvC complex processes Holliday junction (HJ) DNA during genetic recombination and DNA repair. Endonuclease that resolves HJ intermediates. Cleaves cruciform DNA by making single-stranded nicks across the HJ at symmetrical positions within the homologous arms, yielding a 5'-phosphate and a 3'-hydroxyl group; requires a central core of homology in the junction. The consensus cleavage sequence is 5'-(A/T)TT(C/G)-3'. Cleavage occurs on the 3'-side of the TT dinucleotide at the point of strand exchange. HJ branch migration catalyzed by RuvA-RuvB allows RuvC to scan DNA until it finds its consensus sequence, where it cleaves and resolves the cruciform DNA. The sequence is that of Crossover junction endodeoxyribonuclease RuvC from Sulfurovum sp. (strain NBC37-1).